A 108-amino-acid chain; its full sequence is uncharacterized protein (108 aa).

Polar residues predominate over residues methionine 1–lysine 10. 2 disordered regions span residues methionine 1 to arginine 63 and valine 83 to glutamine 108. The segment covering tyrosine 33–proline 62 has biased composition (basic and acidic residues).

This is an uncharacterized protein from Gallid herpesvirus 2 (strain Chicken/Md5/ATCC VR-987) (GaHV-2).